A 270-amino-acid polypeptide reads, in one-letter code: Purine nucleoside phosphorylase BT_4389 (270 aa).

The Zn(2+) site is built by histidine 79, cysteine 124, and histidine 141.

It belongs to the purine nucleoside phosphorylase YfiH/LACC1 family. As to quaternary structure, homodimer. The cofactor is Cu(2+). It depends on Zn(2+) as a cofactor.

It carries out the reaction adenosine + phosphate = alpha-D-ribose 1-phosphate + adenine. It catalyses the reaction S-methyl-5'-thioadenosine + phosphate = 5-(methylsulfanyl)-alpha-D-ribose 1-phosphate + adenine. The enzyme catalyses inosine + phosphate = alpha-D-ribose 1-phosphate + hypoxanthine. The catalysed reaction is adenosine + H2O + H(+) = inosine + NH4(+). Functionally, purine nucleoside enzyme that catalyzes the phosphorolysis of adenosine and inosine nucleosides, yielding D-ribose 1-phosphate and the respective free bases, adenine and hypoxanthine. Also catalyzes the phosphorolysis of S-methyl-5'-thioadenosine into adenine and S-methyl-5-thio-alpha-D-ribose 1-phosphate. Also has adenosine deaminase activity. The chain is Purine nucleoside phosphorylase BT_4389 from Bacteroides thetaiotaomicron (strain ATCC 29148 / DSM 2079 / JCM 5827 / CCUG 10774 / NCTC 10582 / VPI-5482 / E50).